Here is a 320-residue protein sequence, read N- to C-terminus: Glutaminyl-peptide cyclotransferase (320 aa).

The segment covering 1 to 12 (MATRSPYKRQTK) has biased composition (basic residues). A disordered region spans residues 1–22 (MATRSPYKRQTKRSMIQSLPAS). At 1-36 (MATRSPYKRQTKRSMIQSLPASSSASSRRRFISRKR) the chain is on the cytoplasmic side. The chain crosses the membrane as a helical; Signal-anchor for type II membrane protein span at residues 37-57 (FAMMIPLALLSGAVFLFFMPF). Over 58-320 (NSWGQSSGSS…GNYIEQQCLV (263 aa)) the chain is Lumenal. N99 and N163 each carry an N-linked (GlcNAc...) asparagine glycan.

Belongs to the plant glutaminyl-peptide cyclotransferase family. Post-translationally, glycosylated.

It localises to the endoplasmic reticulum membrane. It catalyses the reaction N-terminal L-glutaminyl-[peptide] = N-terminal 5-oxo-L-prolyl-[peptide] + NH4(+). Its function is as follows. Converts glutamine and N-terminal glutamyl residues in peptides to 5-oxoproline and 5-oxoproline residues. Not involved in the major pathway for 5-oxoproline production. This chain is Glutaminyl-peptide cyclotransferase (QCT), found in Arabidopsis thaliana (Mouse-ear cress).